Consider the following 228-residue polypeptide: Urease accessory protein UreF 1 (228 aa).

It belongs to the UreF family. As to quaternary structure, ureD, UreF and UreG form a complex that acts as a GTP-hydrolysis-dependent molecular chaperone, activating the urease apoprotein by helping to assemble the nickel containing metallocenter of UreC. The UreE protein probably delivers the nickel.

The protein localises to the cytoplasm. In terms of biological role, required for maturation of urease via the functional incorporation of the urease nickel metallocenter. This Brucella canis (strain ATCC 23365 / NCTC 10854 / RM-666) protein is Urease accessory protein UreF 1.